The following is a 425-amino-acid chain: Pleckstrin homology domain-containing family A member 2 (425 aa).

The PH 1 domain maps to 7-113 (QNRICGFLDI…WVEALNQASK (107 aa)). K141 is covalently cross-linked (Glycyl lysine isopeptide (Lys-Gly) (interchain with G-Cter in SUMO2)). A Phosphoserine modification is found at S184. The PH 2 domain occupies 198 to 298 (PLIKSGYCVK…WIEGIGAAVQ (101 aa)). The segment covering 310–331 (SRSISLTRPGSSTLTSAPNSIL) has biased composition (polar residues). Residues 310-425 (SRSISLTRPG…DDENIRTSDV (116 aa)) are disordered. 2 positions are modified to phosphoserine: S314 and S349. Basic and acidic residues-rich tracts occupy residues 363–375 (AEEKPLSVEHAPE) and 400–410 (RSEPQHPKEKP).

In terms of assembly, binds MPDZ and PTPN13.

The protein localises to the cytoplasm. The protein resides in the cell membrane. It is found in the nucleus. Binds specifically to phosphatidylinositol 3,4-diphosphate (PtdIns3,4P2), but not to other phosphoinositides. May recruit other proteins to the plasma membrane. The chain is Pleckstrin homology domain-containing family A member 2 (Plekha2) from Mus musculus (Mouse).